Here is a 322-residue protein sequence, read N- to C-terminus: Apolipoprotein E (322 aa).

Positions 1–18 (MKVLWAALLVAFLAGCQG) are cleaved as a signal peptide. A run of 8 repeats spans residues 84–105 (ALMD…EQLS), 106–127 (PVAE…ARLG), 128–149 (ADME…AMLG), 150–171 (QSXD…KRLL), 172–193 (RDVD…EGAE), 194–215 (RGVS…ARAA), 216–238 (TVGS…ERLR), and 239–260 (ARME…EQVE). An 8 X 22 AA approximate tandem repeats region spans residues 84–260 (ALMDETMKEL…RLDEVKEQVE (177 aa)). M147 is subject to Methionine sulfoxide. S151 carries the post-translational modification Phosphoserine. Residues 162-172 (HLRKLRKRLLR) form an LDL and other lipoprotein receptors binding region. 166 to 169 (LRKR) contributes to the heparin binding site. The lipid-binding and lipoprotein association stretch occupies residues 214–295 (AATVGSSLAG…SWFEPLVEDM (82 aa)). O-linked (GalNAc...) threonine glycosylation occurs at T216. Residue 234-241 (GERLRARM) coordinates heparin. The segment at 271–322 (QQMRLQAEAFQARLKSWFEPLVEDMQRQWAGLVEKVQAAVGASAAPVPGDNH) is homooligomerization. Positions 283-295 (RLKSWFEPLVEDM) are specificity for association with VLDL.

It belongs to the apolipoprotein A1/A4/E family. As to quaternary structure, homotetramer. May interact with ABCA1; functionally associated with ABCA1 in the biogenesis of HDLs. May interact with APP/A4 amyloid-beta peptide; the interaction is extremely stable in vitro but its physiological significance is unclear. May interact with MAPT. May interact with MAP2. In the cerebrospinal fluid, interacts with secreted SORL1. Interacts with PMEL; this allows the loading of PMEL luminal fragment on ILVs to induce fibril nucleation. APOE exists as multiple glycosylated and sialylated glycoforms within cells and in plasma. The extent of glycosylation and sialylation are tissue and context specific. Post-translationally, glycated in plasma VLDL. In terms of processing, phosphorylated by FAM20C in the extracellular medium.

Its subcellular location is the secreted. The protein resides in the extracellular space. It is found in the extracellular matrix. The protein localises to the extracellular vesicle. It localises to the endosome. Its subcellular location is the multivesicular body. APOE is an apolipoprotein, a protein associating with lipid particles, that mainly functions in lipoprotein-mediated lipid transport between organs via the plasma and interstitial fluids. APOE is a core component of plasma lipoproteins and is involved in their production, conversion and clearance. Apolipoproteins are amphipathic molecules that interact both with lipids of the lipoprotein particle core and the aqueous environment of the plasma. As such, APOE associates with chylomicrons, chylomicron remnants, very low density lipoproteins (VLDL) and intermediate density lipoproteins (IDL) but shows a preferential binding to high-density lipoproteins (HDL). It also binds a wide range of cellular receptors including the LDL receptor/LDLR, the LDL receptor-related proteins LRP1, LRP2 and LRP8 and the very low-density lipoprotein receptor/VLDLR that mediate the cellular uptake of the APOE-containing lipoprotein particles. Finally, APOE also has a heparin-binding activity and binds heparan-sulfate proteoglycans on the surface of cells, a property that supports the capture and the receptor-mediated uptake of APOE-containing lipoproteins by cells. A main function of APOE is to mediate lipoprotein clearance through the uptake of chylomicrons, VLDLs, and HDLs by hepatocytes. APOE is also involved in the biosynthesis by the liver of VLDLs as well as their uptake by peripheral tissues ensuring the delivery of triglycerides and energy storage in muscle, heart and adipose tissues. By participating in the lipoprotein-mediated distribution of lipids among tissues, APOE plays a critical role in plasma and tissues lipid homeostasis. APOE is also involved in two steps of reverse cholesterol transport, the HDLs-mediated transport of cholesterol from peripheral tissues to the liver, and thereby plays an important role in cholesterol homeostasis. First, it is functionally associated with ABCA1 in the biogenesis of HDLs in tissues. Second, it is enriched in circulating HDLs and mediates their uptake by hepatocytes. APOE also plays an important role in lipid transport in the central nervous system, regulating neuron survival and sprouting. The chain is Apolipoprotein E (APOE) from Ateles geoffroyi (Black-handed spider monkey).